A 528-amino-acid polypeptide reads, in one-letter code: Glutamyl-tRNA(Gln) amidotransferase subunit A, mitochondrial (528 aa).

Catalysis depends on K76, which acts as the Charge relay system. The interval 147–166 (QYREKRKQNPHSKNEDSDWL) is disordered. The active-site Charge relay system is S171. S195 functions as the Acyl-ester intermediate in the catalytic mechanism.

Belongs to the amidase family. GatA subfamily. In terms of assembly, subunit of the heterotrimeric GatCAB amidotransferase (AdT) complex, composed of A (QRSL1), B (GATB) and C (GATC) subunits.

It localises to the mitochondrion. The enzyme catalyses L-glutamyl-tRNA(Gln) + L-glutamine + ATP + H2O = L-glutaminyl-tRNA(Gln) + L-glutamate + ADP + phosphate + H(+). In terms of biological role, allows the formation of correctly charged Gln-tRNA(Gln) through the transamidation of misacylated Glu-tRNA(Gln) in the mitochondria. The reaction takes place in the presence of glutamine and ATP through an activated gamma-phospho-Glu-tRNA(Gln). The chain is Glutamyl-tRNA(Gln) amidotransferase subunit A, mitochondrial from Macaca fascicularis (Crab-eating macaque).